A 237-amino-acid polypeptide reads, in one-letter code: Uridylate kinase (237 aa).

11-14 (KLSG) contacts ATP. Gly53 lines the UMP pocket. The ATP site is built by Gly54 and Arg58. Residues Asp73 and 134–141 (TGNPFFTT) contribute to the UMP site. Positions 161, 167, and 170 each coordinate ATP.

It belongs to the UMP kinase family. Homohexamer.

It localises to the cytoplasm. It carries out the reaction UMP + ATP = UDP + ADP. It participates in pyrimidine metabolism; CTP biosynthesis via de novo pathway; UDP from UMP (UMPK route): step 1/1. Inhibited by UTP. Functionally, catalyzes the reversible phosphorylation of UMP to UDP. The chain is Uridylate kinase from Burkholderia thailandensis (strain ATCC 700388 / DSM 13276 / CCUG 48851 / CIP 106301 / E264).